We begin with the raw amino-acid sequence, 42 residues long: Delta-hexatoxin-Hv1a (42 aa).

Disulfide bonds link Cys1–Cys15, Cys8–Cys20, Cys14–Cys31, and Cys16–Cys42.

It belongs to the neurotoxin 06 (delta-actx) family. In terms of tissue distribution, expressed by the venom gland.

It localises to the secreted. Functionally, inhibits tetrodotoxin-sensitive voltage-gated sodium channels (Nav) by binding to site 3. Slows the inactivation, and causes a prolongation of action potential duration resulting in repetitive firing in autonomic and motor nerve fibers. Does not depolarize the resting potential. Does not affect tetrodotoxin-resistant sodium channels. This lethal neurotoxin is active on both insect and mammalian voltage-gated sodium channels. Pan-neuronal expression in Drosophila is lethal but flies engineered to express the toxin only in pacemaker neurons have profound defects in circadian rhythm but a normal lifespan. The polypeptide is Delta-hexatoxin-Hv1a (Hadronyche versuta (Blue mountains funnel-web spider)).